The primary structure comprises 727 residues: Phenylalanine ammonia-lyase str11 (727 aa).

Tyrosine 105 acts as the Proton donor/acceptor in catalysis. The segment at residues 210–212 (ASG) is a cross-link (5-imidazolinone (Ala-Gly)). A 2,3-didehydroalanine (Ser) modification is found at serine 211. (E)-cinnamate is bound by residues asparagine 271, glutamine 361, arginine 367, asparagine 397, lysine 468, glutamate 496, and asparagine 499.

This sequence belongs to the PAL/histidase family. Post-translationally, contains an active site 4-methylidene-imidazol-5-one (MIO), which is formed autocatalytically by cyclization and dehydration of residues Ala-Ser-Gly.

The enzyme catalyses L-phenylalanine = (E)-cinnamate + NH4(+). It participates in mycotoxin biosynthesis. Its function is as follows. Phenylalanine ammonia-lyase; part of the gene cluster that mediates the biosynthesis of strobilurin A, an antifungal polyketide that contains a key beta-methoxyacrylate toxophore that targets the complex III of the mitochondrial electron transport chain. Strobilurin biosynthesis begins with construction of benzoyl CoA by step-wise elimination of ammonia from phenylalanine by the phenylalanine ammonia-lyase str11, oxygenation by str8 and retro-Claisen reaction to form benzoic acid, which is activated to its CoA thiolester benzoyl CoA by the dedicated CoA ligase str10. Benzoyl CoA forms the starter unit for the highly reducing polyketide synthase stpks1 that produces the polyketide prestrobilutin A. The FAD-dependent oxygenase str9 then catalyzes the key oxidative rearrangement responsible for the creation of the beta-methoxyacrylate toxophore. Str9 performs epoxidation of the 2,3 olefin of prestrobilutin A, followed by Meinwald rearrangement to furnish the aldehyde intermediate. Rapid enolization of the aldehyde intermediate would give the beta-methoxyacrylate skeleton and methylations catalyzed by str2 and str3 complete the synthesis and lead to the production of strobilurin A. The short-chain dehydrogenase stl2 and the dehydrogenase str4 play a role in the shunt pathway leading to the production of bolineol. The cluster encodes no obvious halogenase gene that could be involved in production of strobilurin B, nor any obvious dimethylallyl-transferase that could be involved in the production of strobilurin G. It is possible that unknown proteins encoded in, or near, the cluster (such as str1 or stl1) may form new classes of halogenases or dimethylally-transferases, or that the responsible genes are located elsewhere on the genome. Similarly, proteins encoded by str5/str6 hydrolases appear to have no chemical role in the biosynthesis of strobilurin A. Finally, no obvious self-resistance gene is found within the cluster. This is Phenylalanine ammonia-lyase str11 from Strobilurus tenacellus.